We begin with the raw amino-acid sequence, 788 residues long: LPS-assembly protein LptD (788 aa).

The N-terminal stretch at 1–23 (MSLTSRSLLATMISLALYGPAMA) is a signal peptide.

The protein belongs to the LptD family. As to quaternary structure, component of the lipopolysaccharide transport and assembly complex. Interacts with LptE and LptA.

The protein resides in the cell outer membrane. Its function is as follows. Together with LptE, is involved in the assembly of lipopolysaccharide (LPS) at the surface of the outer membrane. The chain is LPS-assembly protein LptD from Photobacterium profundum (strain SS9).